The following is a 384-amino-acid chain: Glucans biosynthesis protein C (384 aa).

10 helical membrane passes run 17–37 (AWLM…THSW), 54–74 (FIHA…SYML), 91–111 (VGIP…ILLQ), 140–160 (LWFL…FTWF), 173–193 (AISL…YAAI), 212–232 (FIVM…LAFI), 240–260 (FTTP…AYLL), 274–294 (TESV…FSLG), 311–331 (ASLF…AYIT), and 338–358 (LIGF…LYEI).

This sequence belongs to the acyltransferase 3 family. OpgC subfamily.

The protein localises to the cell membrane. It participates in glycan metabolism; osmoregulated periplasmic glucan (OPG) biosynthesis. Its function is as follows. Necessary for the succinyl substitution of periplasmic glucans. Could catalyze the transfer of succinyl residues from the cytoplasmic side of the membrane to the nascent glucan backbones on the periplasmic side of the membrane. The polypeptide is Glucans biosynthesis protein C (Salmonella typhimurium (strain LT2 / SGSC1412 / ATCC 700720)).